An 878-amino-acid chain; its full sequence is Alanine--tRNA ligase (878 aa).

Zn(2+) contacts are provided by histidine 567, histidine 571, cysteine 669, and histidine 673.

Belongs to the class-II aminoacyl-tRNA synthetase family. The cofactor is Zn(2+).

The protein localises to the cytoplasm. The catalysed reaction is tRNA(Ala) + L-alanine + ATP = L-alanyl-tRNA(Ala) + AMP + diphosphate. Catalyzes the attachment of alanine to tRNA(Ala) in a two-step reaction: alanine is first activated by ATP to form Ala-AMP and then transferred to the acceptor end of tRNA(Ala). Also edits incorrectly charged Ser-tRNA(Ala) and Gly-tRNA(Ala) via its editing domain. The polypeptide is Alanine--tRNA ligase (Rickettsia akari (strain Hartford)).